Reading from the N-terminus, the 139-residue chain is Cystatin cpi-1 (139 aa).

The N-terminal stretch at 1–19 (MRFILLIALVFAVLDGINC) is a signal peptide. N-linked (GlcNAc...) asparagine glycosylation occurs at Asn29. The Secondary area of contact signature appears at 65 to 69 (QVVAG). The cysteines at positions 83 and 99 are disulfide-linked.

It belongs to the cystatin family.

Its function is as follows. Cysteine protease inhibitor which inhibits members of the peptidase C1 family. Does not inhibit asparaginyl endopeptidase. May play a protective role against exogenous cysteine proteases derived from soil bacteria or fungi, or rotting fruits and vegetation. In Caenorhabditis elegans, this protein is Cystatin cpi-1.